The sequence spans 405 residues: Cysteine desulfurase IscS (405 aa).

Residues 75 to 76 (AT), Asn155, Gln183, and 203 to 205 (SGH) each bind pyridoxal 5'-phosphate. Position 206 is an N6-(pyridoxal phosphate)lysine (Lys206). Residue Thr243 participates in pyridoxal 5'-phosphate binding. Cys329 serves as the catalytic Cysteine persulfide intermediate. Cys329 provides a ligand contact to [2Fe-2S] cluster.

The protein belongs to the class-V pyridoxal-phosphate-dependent aminotransferase family. NifS/IscS subfamily. As to quaternary structure, homodimer. Forms a heterotetramer with IscU, interacts with other sulfur acceptors. Pyridoxal 5'-phosphate is required as a cofactor.

It localises to the cytoplasm. The enzyme catalyses (sulfur carrier)-H + L-cysteine = (sulfur carrier)-SH + L-alanine. Its pathway is cofactor biosynthesis; iron-sulfur cluster biosynthesis. Its function is as follows. Master enzyme that delivers sulfur to a number of partners involved in Fe-S cluster assembly, tRNA modification or cofactor biosynthesis. Catalyzes the removal of elemental sulfur atoms from cysteine to produce alanine. Functions as a sulfur delivery protein for Fe-S cluster synthesis onto IscU, an Fe-S scaffold assembly protein, as well as other S acceptor proteins. This Pseudoalteromonas translucida (strain TAC 125) protein is Cysteine desulfurase IscS.